Here is a 221-residue protein sequence, read N- to C-terminus: Ras-related protein Rab-27A (221 aa).

At Ser-2 the chain carries N-acetylserine. Ser-2 is subject to Phosphoserine. 16–24 lines the GTP pocket; the sequence is GDSGVGKTS. The short motif at 38–46 is the Effector region element; that stretch reads FITTVGIDF. GTP is bound by residues 74–78, 133–136, and 163–165; these read DTAGQ, NKSD, and SAA. Cys-123 and Cys-188 are oxidised to a cystine. The interval 202-221 is disordered; it reads NGHTSADPLNEEKEKGSCGC. Residues 211-221 are compositionally biased toward basic and acidic residues; the sequence is NEEKEKGSCGC. 2 S-geranylgeranyl cysteine lipidation sites follow: Cys-219 and Cys-221. At Cys-221 the chain carries Cysteine methyl ester.

It belongs to the small GTPase superfamily. Rab family. Binds SYTL1, SLAC2B, MYRIP, SYTL3, SYTL4 and SYTL5. Interacts with RPH3A and RPH3A. Binds MLPH and SYTL2. Interacts with UNC13D. Does not interact with the BLOC-3 complex (heterodimer of HPS1 and HPS4). Interacts (GDP-bound form preferentially) with DENND10.

The protein resides in the membrane. It localises to the melanosome. It is found in the late endosome. Its subcellular location is the lysosome. The catalysed reaction is GTP + H2O = GDP + phosphate + H(+). With respect to regulation, regulated by guanine nucleotide exchange factors (GEFs) which promote the exchange of bound GDP for free GTP, GTPase activating proteins (GAPs) which increase the GTP hydrolysis activity, and GDP dissociation inhibitors which inhibit the dissociation of the nucleotide from the GTPase. Activated by GEFs such as DENND10. Functionally, small GTPase which cycles between active GTP-bound and inactive GDP-bound states. In its active state, binds to a variety of effector proteins to regulate homeostasis of late endocytic pathway, including endosomal positioning, maturation and secretion. Plays a role in cytotoxic granule exocytosis in lymphocytes. Required for both granule maturation and granule docking and priming at the immunologic synapse. This is Ras-related protein Rab-27A (RAB27A) from Sus scrofa (Pig).